Consider the following 451-residue polypeptide: tRNA-2-methylthio-N(6)-dimethylallyladenosine synthase (451 aa).

Positions 11 to 127 (RHYHITTFGC…LEDLLQQVFD (117 aa)) constitute an MTTase N-terminal domain. [4Fe-4S] cluster is bound by residues Cys20, Cys56, Cys90, Cys162, Cys166, and Cys169. Residues 148 to 385 (RDSTITAWVN…NHLVAQKAAE (238 aa)) enclose the Radical SAM core domain. Residues 388 to 451 (QRYLGRIEEV…RAFSLTGEIV (64 aa)) form the TRAM domain.

The protein belongs to the methylthiotransferase family. MiaB subfamily. Monomer. The cofactor is [4Fe-4S] cluster.

It is found in the cytoplasm. The enzyme catalyses N(6)-dimethylallyladenosine(37) in tRNA + (sulfur carrier)-SH + AH2 + 2 S-adenosyl-L-methionine = 2-methylsulfanyl-N(6)-dimethylallyladenosine(37) in tRNA + (sulfur carrier)-H + 5'-deoxyadenosine + L-methionine + A + S-adenosyl-L-homocysteine + 2 H(+). In terms of biological role, catalyzes the methylthiolation of N6-(dimethylallyl)adenosine (i(6)A), leading to the formation of 2-methylthio-N6-(dimethylallyl)adenosine (ms(2)i(6)A) at position 37 in tRNAs that read codons beginning with uridine. The chain is tRNA-2-methylthio-N(6)-dimethylallyladenosine synthase from Rippkaea orientalis (strain PCC 8801 / RF-1) (Cyanothece sp. (strain PCC 8801)).